The chain runs to 269 residues: Shikimate dehydrogenase (NADP(+)) (269 aa).

Shikimate contacts are provided by residues 22–24 (TLS) and threonine 68. Residue lysine 72 is the Proton acceptor of the active site. 2 residues coordinate shikimate: asparagine 93 and aspartate 104. NADP(+) contacts are provided by residues 128–132 (GAGGA), 152–157 (NRTNLR), and phenylalanine 210. Tyrosine 212 lines the shikimate pocket. Glycine 233 is a binding site for NADP(+).

This sequence belongs to the shikimate dehydrogenase family. As to quaternary structure, homodimer.

It carries out the reaction shikimate + NADP(+) = 3-dehydroshikimate + NADPH + H(+). It functions in the pathway metabolic intermediate biosynthesis; chorismate biosynthesis; chorismate from D-erythrose 4-phosphate and phosphoenolpyruvate: step 4/7. Involved in the biosynthesis of the chorismate, which leads to the biosynthesis of aromatic amino acids. Catalyzes the reversible NADPH linked reduction of 3-dehydroshikimate (DHSA) to yield shikimate (SA). This chain is Shikimate dehydrogenase (NADP(+)), found in Saccharolobus islandicus (strain Y.N.15.51 / Yellowstone #2) (Sulfolobus islandicus).